Reading from the N-terminus, the 977-residue chain is Serine/threonine-protein kinase/endoribonuclease IRE1 (977 aa).

The N-terminal stretch at 1 to 18 is a signal peptide; it reads MPARRLLLLLTLLLPGLG. The Lumenal portion of the chain corresponds to 19–443; sequence IFGSTSTVTL…EAPVDSMLKD (425 aa). Asn-176 is a glycosylation site (N-linked (GlcNAc...) asparagine). Residues 410–419 show a composition bias toward polar residues; sequence TSENAPTTVS. Residues 410–434 form a disordered region; the sequence is TSENAPTTVSRDVEEKPAHAPARPE. The helical transmembrane segment at 444–464 threads the bilayer; that stretch reads MATIILSTFLLIGWVAFIITY. At 465–977 the chain is on the cytoplasmic side; that stretch reads PLSMHQQQQL…PQPPVTPDAL (513 aa). Residues 491–559 are disordered; it reads QQQQQLPFHP…PSLEQDDGDE (69 aa). A compositionally biased stretch (low complexity) spans 513–552; that stretch reads TSGPYSESSGTSSPSTSPRASNHSLCSGSSASKAGSSPSL. Residues 571-832 enclose the Protein kinase domain; that stretch reads FCPKDVLGHG…AKHVLKHPFF (262 aa). Residues 577–585, Lys-599, and 643–645 each bind ATP; these read LGHGAEGTI and ELC. Residue Asp-688 is the Proton acceptor of the active site. Residues 690 to 693 and Asp-711 each bind ATP; that span reads KPHN. Phosphoserine is present on residues Ser-724 and Ser-729. One can recognise a KEN domain in the interval 835–963; it reads LEKQLQFFQD…ERLFQPYYFH (129 aa). Positions 906–907 are interacts with hydroxy-aryl-aldehyde inhibitors; the sequence is NK. Thr-973 is modified (phosphothreonine).

It belongs to the protein kinase superfamily. Ser/Thr protein kinase family. In terms of assembly, monomer. Homodimer; disulfide-linked; homodimerization takes place in response to endoplasmic reticulum stress and promotes activation of the kinase and endoribonuclease activities. Dimer formation is driven by hydrophobic interactions within the N-terminal luminal domains and stabilized by disulfide bridges. Interacts (via the luminal region) with DNAJB9/ERdj4; interaction takes place in unstressed cells and promotes recruitment of HSPA5/BiP. Interacts (via the luminal region) with HSPA5/BiP; HSPA5/BiP is a negative regulator of the unfolded protein response (UPR) that prevents homodimerization of ERN1/IRE1 and subsequent activation of the protein. Interaction with HSPA5 also competitively inhibits ERN1 interaction with MANF. Interacts with PDIA6, a negative regulator of the UPR; the interaction is direct and disrupts homodimerization. Interacts with DAB2IP (via PH domain); the interaction occurs in a endoplasmic reticulum stress-induced dependent manner and is required for subsequent recruitment of TRAF2 to ERN1/IRE1. Interacts with TAOK3 and TRAF2. Interacts with RNF13. Interacts with LACC1. Interacts (when unphosphorylated) with DDRGK1; interaction is dependent on UFM1 and takes place in response to endoplasmic reticulum stress, regulating ERN1/IRE1-alpha stability. Interacts (via N-terminus) with P4HB/PDIA1; the interaction is enhanced by phosphorylation of P4HB by FAM20C in response to endoplasmic reticulum stress and results in attenuation of ERN1 activity. Interacts with TMBIM6; this interaction inhibits ERN1 activity. Interacts (via luminal domain) with MANF (via C-terminus); the interaction is decreased in the presence of increasing concentrations of Ca(2+). Requires Mg(2+) as cofactor. Post-translationally, autophosphorylated following homodimerization. Autophosphorylation promotes activation of the endoribonuclease domain. In response to ER stress, phosphorylated at Ser-724, Ser-729 and possibly Ser-726; phosphorylation promotes oligomerization and endoribonuclease activity. Dephosphorylated at Ser-724, Ser-729 and possibly Ser-726 by RPAP2 to abort failed ER-stress adaptation and trigger apoptosis. Phosphorylated at Ser-724; in response to the ER stressor tunicamycin. In terms of processing, ADP-ribosylated by PARP16 upon ER stress, which increases both kinase and endonuclease activities. In terms of tissue distribution, ubiquitously expressed. High levels observed in pancreatic tissue.

It localises to the endoplasmic reticulum membrane. The catalysed reaction is L-seryl-[protein] + ATP = O-phospho-L-seryl-[protein] + ADP + H(+). It carries out the reaction L-threonyl-[protein] + ATP = O-phospho-L-threonyl-[protein] + ADP + H(+). With respect to regulation, the kinase domain is activated by trans-autophosphorylation following homodimerization. Kinase activity is required for activation of the endoribonuclease domain. Endoribonuclease activity is specifically inhibited by hydroxy-aryl-aldehydes (HAA). Its function is as follows. Serine/threonine-protein kinase and endoribonuclease that acts as a key sensor for the endoplasmic reticulum unfolded protein response (UPR). In unstressed cells, the endoplasmic reticulum luminal domain is maintained in its inactive monomeric state by binding to the endoplasmic reticulum chaperone HSPA5/BiP. Accumulation of misfolded proteins in the endoplasmic reticulum causes release of HSPA5/BiP, allowing the luminal domain to homodimerize, promoting autophosphorylation of the kinase domain and subsequent activation of the endoribonuclease activity. The endoribonuclease activity is specific for XBP1 mRNA and excises 26 nucleotides from XBP1 mRNA. The resulting spliced transcript of XBP1 encodes a transcriptional activator protein that up-regulates expression of UPR target genes. Acts as an upstream signal for ER stress-induced GORASP2-mediated unconventional (ER/Golgi-independent) trafficking of CFTR to cell membrane by modulating the expression and localization of SEC16A. The protein is Serine/threonine-protein kinase/endoribonuclease IRE1 of Homo sapiens (Human).